Here is a 258-residue protein sequence, read N- to C-terminus: MGGKMLRSVSELIYKVYARYLLGQINLNNLPGHVALIVDGNRRWARKEKRDRISDGHRAGAGKAVDFLHWCDELDINIVTLYLLSNDNLKNRNRQELNDLVQVICNLIAQVSKRWKVNHVGSCENLPELLGNSLEGVKSSTKTNRYSERSMTVNLAIGYSGRAEITEAVRKIVNTYPIGDLPEKITEEVISANLYTGGLSDPDLIIRTSGEQRLSDFMPWQSTHSEFYFLEALGPDLRKVDFLRAIRDFSIRRRSFGA.

Aspartate 39 is a catalytic residue. Aspartate 39 serves as a coordination point for Mg(2+). Residues 40 to 43 (GNRR), tryptophan 44, arginine 52, histidine 57, and 85 to 87 (SND) each bind substrate. The active-site Proton acceptor is asparagine 88. Substrate contacts are provided by residues arginine 92, arginine 207, and 213 to 215 (RLS). A Mg(2+)-binding site is contributed by glutamate 226.

This sequence belongs to the UPP synthase family. As to quaternary structure, homodimer. Mg(2+) serves as cofactor.

Its function is as follows. Catalyzes the condensation of isopentenyl diphosphate (IPP) with allylic pyrophosphates generating different type of terpenoids. This is Isoprenyl transferase 1 from Tropheryma whipplei (strain TW08/27) (Whipple's bacillus).